We begin with the raw amino-acid sequence, 224 residues long: Transmembrane protein C16orf54 (224 aa).

O-linked (GalNAc...) threonine glycosylation occurs at Thr4. The chain crosses the membrane as a helical span at residues Ile32–Leu52. Disordered stretches follow at residues Thr104–Gly138 and Trp152–Pro203. Phosphothreonine occurs at positions 112 and 116. Position 194 is a phosphoserine (Ser194).

In terms of processing, O-glycosylated with core 1 or possibly core 8 glycans.

The protein resides in the membrane. The protein is Transmembrane protein C16orf54 (C16orf54) of Homo sapiens (Human).